The sequence spans 2466 residues: MSDHNHTNGTTNGNGIGSNGVQSHVPNGAHINGTSSGLKPNGISNGTTNGINGHAPSTAATQTPVAVVGLACRLPGKSNSPEALWKFLLDGGVADPTPPDHRYNFSTHYDGSQRPGTMPSPGGMLLRDVDLTAFDASFFNIGHAEAAVMDPQQRQLLEVTYECLENSGVPLGKLRGTRAGCVVANNAVEYEGFATHDREDNVSGGSTGFSRSILSNRISHYLDIQGPSISIDTACSGTLVGVDLACRYLQTNQADGMLVGGALLYLDPSALQDTGPMKGAFSPTGQCHTFDADADGYIRGEAISCVYLKRLDDAIRDGDPIRAVIRGSATNSDGNTTSLTQPSSAAQAAAIRMAYSNAGISDFNETGYLECHGTGTPTGDPLEVAGLASVFAPTRPAEKPLIIGSIKSNVGHSESAAGLSGLIKTVLTVERGVIPGTPTFIKPTPRIDFDKSRVRPSRRTIRWPQSASGLRRASVNSFGFGGTNAHVVLEARDSMIKDPSVRKGFVFSNHGSSLFGLDADLEAGSERPYILALSANDKDALETNIQTLSTHLGDPAVGVKLSDVAYTLSERRTHHFHRGFVIADSLEISSDSMILGKKKAQPPRVAFIFTGQGAQWSQMGRDLIESFPLAKATIQKLDAALQTLPNPPQWSLVDELCEAREGAVLRLPEFSQPLVTALQIAQLTVLSHWGISATRVLGHSSGEIAAAVAAGLVRPEEAIKIAYLRGLAAKFHQPDQPLGMLAVGVSAEAVAPYLETEPTVQIACFNSPTSLTLSGQQPDLVRVCDRLKADGHFARMLQVNLAYHSEHIRSIAEEYHSLLKEQVPGAAGSSGNKKVTMFSSVTGKPISEAYDALGPDYWRQNMVSPVRFAQAASNMLSGPESSEFLIEIGPAGALAGPVAQVIKAAPSARNTQYVAAAKRGADTLLALYETAGKLWANSGVVDLAKVNGYDGQANLVVDLPNYQWNHSRRYWRESLSASEFLQRPFLSHDLLGSKILSVPWHNPTFYQVIELSDVPWLRDHKIGDQVIFPAAGYLSMAVEAIHQTTVMTQWREKGVPKSFAYCLKDVRFLRSLVLEEDVRAKISLALIPLHASPRRWYNFRVRSLMEGVWVDHCDGLVRIDEEAFDTTAPSRALEPLAHPEPGAVGYKSANAGEFSFGPAFQRIEYFDWIWGSPETRAQVTTEYPVSAYSKQSEYPVHPVAMDCLLQLTGYSIAQMQMNALDDINCVPVGIEGIVIPSRSNPPAKSCMVRSVAHLLDSSTSQTYGSRFASAGLYDPEDRSLVMEIKRIRFDPISSRGDQSEHVYMHFGWNADVSLTDAEGLNSYLAAAAGSPEEKDLVAVATPEEQKNDESRSSPFALVQRLLDALAHRRPEMAVLEANLDSDDSTCLWLDLPSKSNNSGPRSGYSKFHCVSKDPKALSHLQETHNEAPRTTWDLVDMAHPSGRIDSTDKFDLILVKSSDPETTFTTPALLSNIVASVSEGGMVILLNTQGKPTVFHDASQALEASGLCRTKDLSASVGGLAIVATARRVGPAATTASGDKVITCFRLTDDDGPSNVLAGLKDAGWAVNTCSDADALAHRSNILVVDELFTTVASRVTAEQWKMLQTIIRKECNVLWVTKGGQMEVTEPDRAAAPGLLRTIRSEELGIRLISLDVENPTGPRTLYAIEECLRLLQESHAGIQKDSEFVERGGVIFTPRLLADPALNAAKHEPVNGRKPQMESLQDKKTPVCLGVERVGTIDSLHYAERSPTPLPIKDGYIEIEIHAAGVNFKDLALTLGIVNSNDPFTLGGEAAGVVSRIGKGVPGDRFVAGQRVVAMFPGSFGNRIQVPWQVAHAIPDRLSFEEAATLPVAFLTAMHGLFDLGNLQAGQRVLIHSATGGTGSAAVQLCQHMGAEIFATAGTEEKRRFLQDIYNIPADHIFSSRTTDFEHQIMRLTGGLGVDVILNSLTGDLLEASWNIIAHGGTMVEIGKKDIMEHSRLSMEPFSRSASFRALDLSLDTADLYGKGAGLGQTVGRLFERLFSLLERGHVRPITPMQTFAFGQVTDALALMRSTKHMGKLVLSRGPDSNDQVAIRPAQRLVRFRPDATYLLVGGLKGICGSLAVDFAKKGAKHLAALSRSNYDDPQSQIVLRQLKDLDCQIDLLRGDITKVEDVRRVFAETTVPVAGIIQGAMVLRDRPFANMTVEEYHAAAACKIQGTWNLHNCAQEAQAPLDFFTILSSISSVLGNPAQGNYASGCSFQDAFSSYRQELGLPASTVNLGIIEQIGYMARNEDLLEKNVSSEVAKGINERLLCKIIGYSILQQSGSPVSEDPYSRARMVTGLTMPQPPDSMLRLDARFAALFVRDGSSSNTQAGGSGAASQDVSQEIKELNLLLRSKSARAANLPQVVDATLAVVSGYLVRAMRLSEAIEPERSLSAYGIDSLAAVEFRNWLRLELGAAMSVIDITTAPSLLFLAEKIITKVDGVE.

The segment at Met-1–Ser-57 is disordered. Over residues Asn-41–Gly-53 the composition is skewed to low complexity. The 430-residue stretch at Gln-62 to Ala-491 folds into the Ketosynthase family 3 (KS3) domain. Catalysis depends on for beta-ketoacyl synthase activity residues Cys-235, His-372, and His-412. The malonyl-CoA:ACP transacylase (MAT) domain stretch occupies residues Ile-608–Ala-921. Catalysis depends on Ser-700, which acts as the For malonyltransferase activity. Positions His-988 to Phe-1124 are N-terminal hotdog fold. The dehydratase (DH) domain stretch occupies residues His-988–Asp-1297. Residues His-988 to Gln-1298 form the PKS/mFAS DH domain. The active-site Proton acceptor; for dehydratase activity is His-1020. Residues Ala-1137 to Gln-1298 form a C-terminal hotdog fold region. Asp-1202 (proton donor; for dehydratase activity) is an active-site residue. The segment at Gly-1737 to Leu-2061 is enoyl reductase (ER) domain. Residues Thr-2087–Gln-2264 form a ketoreductase (KR) domain region. Positions Ala-2382–Val-2462 constitute a Carrier domain. Ser-2422 carries the post-translational modification O-(pantetheine 4'-phosphoryl)serine.

Pantetheine 4'-phosphate serves as cofactor.

It participates in secondary metabolite biosynthesis. Its function is as follows. Highly reducing polyketide synthase (HR-PKS); part of the gene cluster that mediates the biosynthesis of phaeospelide A, a fungal polyene macrolide with a 34-membered macrolactone ring and an all-trans conjugated hexaene structure. The HR-PKS ApmlA uses acetyl-CoA and malonyl-CoA as its starter and extender units, respectively, and provides the large carbon framework in phaeospelide via 16 cycles of polyketide chain elongation, which is the largest number identified in fungal iterative PKSs thus far. During round 1, the KR domain reduces beta-ketone to an L-oriented hydroxy group, while during later rounds, it provides hydroxy groups in the D-configuration. The characteristic conjugated hexaene moiety is built during the later rounds (10-15), when the KR and DH domains are at work but ER is off. Phylogenetic analysis of the DH domain suggests that a polyene formation is programmed in the DH domain. Finally, the mature ACP-tethered carbon chain is transferred to the serine residue of the thiohydrolase apmlB, followed by intramolecular macrolactonization, generating phaeospelide A. When one elongation cycle during rounds 7-9 is skipped, phaeospelide B is biosynthesized instead. The protein is Highly reducing polyketide synthase apmlA of Arthrinium phaeospermum (Gymnosporium phaeospermum).